A 262-amino-acid polypeptide reads, in one-letter code: Acyl-[acyl-carrier-protein]--UDP-N-acetylglucosamine O-acyltransferase (262 aa).

Belongs to the transferase hexapeptide repeat family. LpxA subfamily. In terms of assembly, homotrimer.

The protein resides in the cytoplasm. The enzyme catalyses a (3R)-hydroxyacyl-[ACP] + UDP-N-acetyl-alpha-D-glucosamine = a UDP-3-O-[(3R)-3-hydroxyacyl]-N-acetyl-alpha-D-glucosamine + holo-[ACP]. The protein operates within glycolipid biosynthesis; lipid IV(A) biosynthesis; lipid IV(A) from (3R)-3-hydroxytetradecanoyl-[acyl-carrier-protein] and UDP-N-acetyl-alpha-D-glucosamine: step 1/6. Its function is as follows. Involved in the biosynthesis of lipid A, a phosphorylated glycolipid that anchors the lipopolysaccharide to the outer membrane of the cell. In Burkholderia ambifaria (strain ATCC BAA-244 / DSM 16087 / CCUG 44356 / LMG 19182 / AMMD) (Burkholderia cepacia (strain AMMD)), this protein is Acyl-[acyl-carrier-protein]--UDP-N-acetylglucosamine O-acyltransferase.